Reading from the N-terminus, the 80-residue chain is Small ribosomal subunit protein uS17 (80 aa).

Belongs to the universal ribosomal protein uS17 family. As to quaternary structure, part of the 30S ribosomal subunit.

One of the primary rRNA binding proteins, it binds specifically to the 5'-end of 16S ribosomal RNA. This chain is Small ribosomal subunit protein uS17, found in Cereibacter sphaeroides (strain ATCC 17029 / ATH 2.4.9) (Rhodobacter sphaeroides).